Reading from the N-terminus, the 148-residue chain is MTADIIYIYSDGACKGNPGAGGWGALLVAGGHRKEISGGEPNTTNNRMEMTAVIRALELLKRPSTVEVHTDSQYVQKGVSEWLPGWKRRNWRTADGKPVKNQDLWQQLDALSQQHRIVWKWVRGHAGHPENERADVLANQGVLQARQY.

The region spanning 2–143 (TADIIYIYSD…ADVLANQGVL (142 aa)) is the RNase H type-1 domain. Mg(2+) contacts are provided by Asp11, Glu49, Asp71, and Asp135.

Belongs to the RNase H family. As to quaternary structure, monomer. Mg(2+) serves as cofactor.

The protein resides in the cytoplasm. It carries out the reaction Endonucleolytic cleavage to 5'-phosphomonoester.. In terms of biological role, endonuclease that specifically degrades the RNA of RNA-DNA hybrids. The polypeptide is Ribonuclease H (Thiobacillus denitrificans (strain ATCC 25259 / T1)).